We begin with the raw amino-acid sequence, 443 residues long: Phosphoglucosamine mutase (443 aa).

The active-site Phosphoserine intermediate is the serine 102. The Mg(2+) site is built by serine 102, aspartate 241, aspartate 243, and aspartate 245. Serine 102 carries the post-translational modification Phosphoserine.

The protein belongs to the phosphohexose mutase family. Requires Mg(2+) as cofactor. In terms of processing, activated by phosphorylation.

It catalyses the reaction alpha-D-glucosamine 1-phosphate = D-glucosamine 6-phosphate. Functionally, catalyzes the conversion of glucosamine-6-phosphate to glucosamine-1-phosphate. The chain is Phosphoglucosamine mutase from Albidiferax ferrireducens (strain ATCC BAA-621 / DSM 15236 / T118) (Rhodoferax ferrireducens).